Consider the following 555-residue polypeptide: Transcription factor kojR (555 aa).

The zn(2)-C6 fungal-type DNA-binding region spans 21–47 (CETCKLRKRKCDGHEPCTYCLRYEYQC). The disordered stretch occupies residues 51–73 (PHPRRKPAASKSSARPSEEEDSP).

The protein localises to the nucleus. Transcription factor that regulates the gene cluster that mediates the biosynthesis of 5-hydroxy-2-hydroxymethyl-1,4-pyrone, also know as kojic acid, a by-product in the fermentation process of malting rice that acts as a chelation agent. Negatively regulates the expression of the kojic acid-related protein kap1. Improves the antioxidant capacity via the accumulation of kojic acid that is also a strong oxidant. The polypeptide is Transcription factor kojR (Aspergillus oryzae (strain ATCC 42149 / RIB 40) (Yellow koji mold)).